We begin with the raw amino-acid sequence, 120 residues long: UPF0295 protein Aflv_0370 (120 aa).

2 consecutive transmembrane segments (helical) span residues I12 to F32 and L42 to G62.

The protein belongs to the UPF0295 family.

It localises to the cell membrane. The sequence is that of UPF0295 protein Aflv_0370 from Anoxybacillus flavithermus (strain DSM 21510 / WK1).